A 350-amino-acid chain; its full sequence is Histidinol-phosphate aminotransferase 1 (350 aa).

Lys-210 is subject to N6-(pyridoxal phosphate)lysine.

This sequence belongs to the class-II pyridoxal-phosphate-dependent aminotransferase family. Histidinol-phosphate aminotransferase subfamily. In terms of assembly, homodimer. Pyridoxal 5'-phosphate serves as cofactor.

It catalyses the reaction L-histidinol phosphate + 2-oxoglutarate = 3-(imidazol-4-yl)-2-oxopropyl phosphate + L-glutamate. It functions in the pathway amino-acid biosynthesis; L-histidine biosynthesis; L-histidine from 5-phospho-alpha-D-ribose 1-diphosphate: step 7/9. The protein is Histidinol-phosphate aminotransferase 1 of Pseudomonas fluorescens (strain ATCC BAA-477 / NRRL B-23932 / Pf-5).